The chain runs to 354 residues: NADH-quinone oxidoreductase subunit H (354 aa).

A run of 8 helical transmembrane segments spans residues 16 to 36 (WLAV…PVMI), 90 to 110 (YLFI…WAVI), 126 to 146 (VLYV…SGWA), 170 to 190 (MGFA…TGIV), 197 to 217 (IWNW…ISGL), 249 to 269 (VFFL…AIMF), 290 to 310 (VPGF…FLWF), and 329 to 349 (VLIP…YFKV).

Belongs to the complex I subunit 1 family. As to quaternary structure, NDH-1 is composed of 14 different subunits. Subunits NuoA, H, J, K, L, M, N constitute the membrane sector of the complex.

The protein localises to the cell inner membrane. It catalyses the reaction a quinone + NADH + 5 H(+)(in) = a quinol + NAD(+) + 4 H(+)(out). Functionally, NDH-1 shuttles electrons from NADH, via FMN and iron-sulfur (Fe-S) centers, to quinones in the respiratory chain. The immediate electron acceptor for the enzyme in this species is believed to be ubiquinone. Couples the redox reaction to proton translocation (for every two electrons transferred, four hydrogen ions are translocated across the cytoplasmic membrane), and thus conserves the redox energy in a proton gradient. This subunit may bind ubiquinone. The polypeptide is NADH-quinone oxidoreductase subunit H (Hydrogenovibrio crunogenus (strain DSM 25203 / XCL-2) (Thiomicrospira crunogena)).